The chain runs to 274 residues: Regulator of G-protein signaling rgs-11 (274 aa).

Residues 137–256 form the RGS domain; that stretch reads SPGLLAASKY…LEDPLYLDLL (120 aa).

The polypeptide is Regulator of G-protein signaling rgs-11 (rgs-11) (Caenorhabditis elegans).